Consider the following 280-residue polypeptide: UDP-2,3-diacylglucosamine pyrophosphatase LpxI (280 aa).

Residues alanine 12, 74–75 (NV), glutamine 169, 187–188 (TD), lysine 214, and 226–233 (LPTIGVAT) contribute to the substrate site.

Belongs to the LpxI family. Homodimer. It depends on Mg(2+) as a cofactor.

It is found in the cell inner membrane. It catalyses the reaction UDP-2-N,3-O-bis[(3R)-3-hydroxytetradecanoyl]-alpha-D-glucosamine + H2O = 2-N,3-O-bis[(3R)-3-hydroxytetradecanoyl]-alpha-D-glucosaminyl 1-phosphate + UMP + 2 H(+). It participates in glycolipid biosynthesis; lipid IV(A) biosynthesis; lipid IV(A) from (3R)-3-hydroxytetradecanoyl-[acyl-carrier-protein] and UDP-N-acetyl-alpha-D-glucosamine: step 4/6. Inhibited by high concentrations of Cu(2+) and Zn(2+). Completely inhibited by EDTA in vitro. In terms of biological role, hydrolyzes the pyrophosphate bond of UDP-2,3-diacylglucosamine to form 2,3-diacylglucosamine 1-phosphate (lipid X) and UMP by catalyzing the attack of water at the beta-P atom. Involved in the biosynthesis of lipid A, a phosphorylated glycolipid that anchors the lipopolysaccharide to the outer membrane of the cell. Can functionally complement lpxH deficiency in E.coli. Cannot use CDP-diacylglycerol as substrate. This is UDP-2,3-diacylglucosamine pyrophosphatase LpxI from Caulobacter vibrioides (strain ATCC 19089 / CIP 103742 / CB 15) (Caulobacter crescentus).